The primary structure comprises 509 residues: Histidine--tRNA ligase, cytoplasmic (509 aa).

Ala2 bears the N-acetylalanine mark. The 57-residue stretch at 3–59 (ERAALEELVKLQGERVRGLKQQKASAELIEEEVAKLLKLKAQLGPDESKQKFVLKTP) folds into the WHEP-TRS domain. At Ser66 the chain carries Phosphoserine. L-histidine is bound by residues 130–132 (DLT), Arg157, Gln173, Asp177, Arg326, and 330–331 (YY). Ser356 carries the phosphoserine modification.

The protein belongs to the class-II aminoacyl-tRNA synthetase family. Homodimer.

The protein localises to the cytoplasm. The enzyme catalyses tRNA(His) + L-histidine + ATP = L-histidyl-tRNA(His) + AMP + diphosphate + H(+). Catalyzes the ATP-dependent ligation of histidine to the 3'-end of its cognate tRNA, via the formation of an aminoacyl-adenylate intermediate (His-AMP). Plays a role in axon guidance. The polypeptide is Histidine--tRNA ligase, cytoplasmic (HARS1) (Pongo abelii (Sumatran orangutan)).